The chain runs to 569 residues: Vacuolar protein sorting-associated protein 45 homolog (569 aa).

The protein belongs to the STXBP/unc-18/SEC1 family. Interacts with both SYP41 or SYP42 and VTI12, but in different domains of the trans-Golgi network. Does not interact on the pervacuolar compartment with VTI11, SYP21 or SYP22, or on the cis-Golgi with SYP31. Interacts at the trans-Golgi network (TGN) with the SYP41/SYP61/VTI12 SNARE complex. Highly expressed in roots, lower expression in leaves, stems and flowers.

It localises to the golgi apparatus. It is found in the trans-Golgi network membrane. The protein localises to the early endosome. Its function is as follows. Involved in the protein transport to the vacuole, probably at the level of vesicle fusion at the trans-Golgi network (TGN) and not in transport from the TGN to the prevacuolar compartment, by promoting the recycling of vacuolar sorting receptors back to the TGN. Involved in early endosomal vesicle trafficking, particularly at the trans-Golgi-network/early endosome (TGN/EE) thus residing in early endocytic route. Together with BIG5/BEN1 required for polar PIN-FORMED (PIN) proteins localization, for their dynamic repolarization, and consequently for auxin activity gradient formation and auxin-related developmental processes (e.g. embryonic patterning, organogenesis and vasculature venation patterning). Necessary for pollen germination and for cell expansion. Binds syntaxins. The protein is Vacuolar protein sorting-associated protein 45 homolog of Arabidopsis thaliana (Mouse-ear cress).